The primary structure comprises 539 residues: F-box/WD-40 repeat-containing protein At5g21040 (539 aa).

The F-box domain occupies 65–111; the sequence is STTIIDLPQALISEILNCLDPKELGLVSCVSTYLHRLASEHHAWKEF. WD repeat units lie at residues 160 to 199, 201 to 239, 255 to 292, 294 to 330, 334 to 373, 382 to 419, and 433 to 477; these read GHTE…SIAA, KPLG…RNLF, GHEG…CVKT, RHSD…PLAI, AHEG…SETS, PHTS…KTNR, and PPQR…EIER. The tract at residues 505–539 is disordered; that stretch reads GRPDQCSIAAHKNPINGERNRAWHSKRRASGKAKA. Residues 526–539 show a composition bias toward basic residues; the sequence is AWHSKRRASGKAKA.

The chain is F-box/WD-40 repeat-containing protein At5g21040 from Arabidopsis thaliana (Mouse-ear cress).